A 308-amino-acid polypeptide reads, in one-letter code: Oxygen-dependent coproporphyrinogen-III oxidase (308 aa).

Residue Ser100 participates in substrate binding. Positions 104 and 114 each coordinate a divalent metal cation. Catalysis depends on His114, which acts as the Proton donor. 116 to 118 is a binding site for substrate; sequence NFR. The a divalent metal cation site is built by His153 and His183. Positions 248-283 are important for dimerization; that stretch reads YVEFNLVFDRGTIFGLQSGGRTESILSSMPPMATWK. Substrate is bound at residue 266-268; it reads GGR.

The protein belongs to the aerobic coproporphyrinogen-III oxidase family. As to quaternary structure, homodimer. A divalent metal cation is required as a cofactor.

The protein resides in the cytoplasm. The enzyme catalyses coproporphyrinogen III + O2 + 2 H(+) = protoporphyrinogen IX + 2 CO2 + 2 H2O. It participates in porphyrin-containing compound metabolism; protoporphyrin-IX biosynthesis; protoporphyrinogen-IX from coproporphyrinogen-III (O2 route): step 1/1. In terms of biological role, involved in the heme biosynthesis. Catalyzes the aerobic oxidative decarboxylation of propionate groups of rings A and B of coproporphyrinogen-III to yield the vinyl groups in protoporphyrinogen-IX. This chain is Oxygen-dependent coproporphyrinogen-III oxidase, found in Francisella tularensis subsp. holarctica (strain FTNF002-00 / FTA).